We begin with the raw amino-acid sequence, 403 residues long: Coenzyme A biosynthesis bifunctional protein CoaBC (403 aa).

The tract at residues 1–197 (MISEIMHPTK…GNNLKKEGNR (197 aa)) is phosphopantothenoylcysteine decarboxylase. A phosphopantothenate--cysteine ligase region spans residues 198–403 (VLILNGGTVE…VEKVKKLVKS (206 aa)). CTP-binding residues include aspartate 285, lysine 294, and phenylalanine 327.

The protein in the N-terminal section; belongs to the HFCD (homo-oligomeric flavin containing Cys decarboxylase) superfamily. This sequence in the C-terminal section; belongs to the PPC synthetase family. As to quaternary structure, homododecamer. The CoaC domain is responsible for dodecamer formation. The cofactor is Mg(2+). FMN is required as a cofactor.

It carries out the reaction N-[(R)-4-phosphopantothenoyl]-L-cysteine + H(+) = (R)-4'-phosphopantetheine + CO2. The enzyme catalyses (R)-4'-phosphopantothenate + L-cysteine + CTP = N-[(R)-4-phosphopantothenoyl]-L-cysteine + CMP + diphosphate + H(+). Its pathway is cofactor biosynthesis; coenzyme A biosynthesis. In terms of biological role, catalyzes two sequential steps in the biosynthesis of coenzyme A. In the first step cysteine is conjugated to 4'-phosphopantothenate to form 4-phosphopantothenoylcysteine. In the second step the latter compound is decarboxylated to form 4'-phosphopantotheine. The polypeptide is Coenzyme A biosynthesis bifunctional protein CoaBC (Methanocaldococcus jannaschii (strain ATCC 43067 / DSM 2661 / JAL-1 / JCM 10045 / NBRC 100440) (Methanococcus jannaschii)).